The chain runs to 174 residues: Alpha-crystallin B chain (174 aa).

Residue Met1 is modified to N-acetylmethionine. Residues 55–163 (RMPSWLETGL…PERSIPITRE (109 aa)) enclose the sHSP domain. His82, His103, Glu105, and His110 together coordinate Zn(2+). The tract at residues 148–174 (RKQSDVPERSIPITREEKPAIAGSQRK) is disordered. Positions 149 to 166 (KQSDVPERSIPITREEKP) are enriched in basic and acidic residues.

It belongs to the small heat shock protein (HSP20) family. Heteromer composed of three CRYAA and one CRYAB subunits. Aggregates with homologous proteins, including the small heat shock protein HSPB1, to form large heteromeric complexes. Inter-subunit bridging via zinc ions enhances stability, which is crucial as there is no protein turn over in the lens. In terms of tissue distribution, lens as well as other tissues.

In terms of biological role, may contribute to the transparency and refractive index of the lens. The polypeptide is Alpha-crystallin B chain (CRYAB) (Gallus gallus (Chicken)).